The following is a 397-amino-acid chain: uncharacterized protein (397 aa).

Residues Cys8, Cys14, Cys17, and Cys95 each coordinate [4Fe-4S] cluster. Gln229, Tyr258, Glu279, and Asp325 together coordinate S-adenosyl-L-methionine. Cys352 (nucleophile) is an active-site residue.

It belongs to the class I-like SAM-binding methyltransferase superfamily. RNA M5U methyltransferase family.

This is an uncharacterized protein from Chlamydia muridarum (strain MoPn / Nigg).